We begin with the raw amino-acid sequence, 437 residues long: Adenylosuccinate synthetase (437 aa).

GTP contacts are provided by residues 12–18 (GDEGKGK) and 40–42 (GHT). Catalysis depends on D13, which acts as the Proton acceptor. D13 and G40 together coordinate Mg(2+). IMP-binding positions include 13 to 16 (DEGK), 38 to 41 (NAGH), T128, R142, Q223, T238, and R302. Residue H41 is the Proton donor of the active site. A substrate-binding site is contributed by 298 to 304 (TTTGRRR). GTP is bound by residues R304, 330–332 (KLD), and 412–414 (SLG).

Belongs to the adenylosuccinate synthetase family. As to quaternary structure, homodimer. Mg(2+) serves as cofactor.

The protein localises to the cytoplasm. It carries out the reaction IMP + L-aspartate + GTP = N(6)-(1,2-dicarboxyethyl)-AMP + GDP + phosphate + 2 H(+). Its pathway is purine metabolism; AMP biosynthesis via de novo pathway; AMP from IMP: step 1/2. Its function is as follows. Plays an important role in the de novo pathway of purine nucleotide biosynthesis. Catalyzes the first committed step in the biosynthesis of AMP from IMP. The polypeptide is Adenylosuccinate synthetase (Prochlorococcus marinus (strain MIT 9211)).